We begin with the raw amino-acid sequence, 93 residues long: Stromal cell-derived factor 1 (93 aa).

A signal peptide spans 1 to 21 (MNAKVVVVLVLVLTALCLSDG). A Receptor activation motif motif is present at residues 22–23 (KP). Residues 29 to 33 (RCPCR) form a receptor and heparin binding region. Disulfide bonds link Cys30/Cys55 and Cys32/Cys71. Receptor binding stretches follow at residues 39–41 (VAR), 48–50 (KIL), and 60–70 (VARLKNNNRQV). Heparin contacts are provided by residues 41–51 (RANVKHLKILN), Arg62, Gln69, and Lys85.

This sequence belongs to the intercrine alpha (chemokine CxC) family. In terms of assembly, monomer or homodimer; in equilibrium. Dimer formation is induced by non acidic pH and the presence of multivalent anions, and by binding to CXCR4 or heparin. Monomeric form is required for full chemotactic activity and resistance to ischemia/reperfusion injury, whereas the dimeric form acts as a partial agonist of CXCR4, stimulating Ca2+ mobilization but with no chemotactic activity and instead acts as a selective antagonist that blocks chemotaxis induced by the monomeric form. Interacts with the N-terminus of ACKR3. Interacts with integrin subunit ITGB3 (via the allosteric site (site 2)). Interacts with TNFAIP6 (via Link domain). (Microbial infection) Interacts with molluscum contagiosum virus protein MC148. In terms of processing, processed forms SDF-1-beta(3-72) and SDF-1-alpha(3-67) are produced after secretion by proteolytic cleavage of isoforms Beta and Alpha, respectively. The N-terminal processing is probably achieved by DPP4. Isoform Alpha is first cleaved at the C-terminus to yield a SDF-1-alpha(1-67) intermediate before being processed at the N-terminus. The C-terminal processing of isoform Alpha is reduced by binding to heparin and, probably, cell surface proteoglycans. Isoform Alpha and isoform Beta are ubiquitously expressed, with highest levels detected in liver, pancreas and spleen. Isoform Gamma is mainly expressed in heart, with weak expression detected in several other tissues. Isoform Delta, isoform Epsilon and isoform Theta have highest expression levels in pancreas, with lower levels detected in heart, kidney, liver and spleen.

The protein resides in the secreted. In terms of biological role, chemoattractant active on T-lymphocytes and monocytes but not neutrophils. Activates the C-X-C chemokine receptor CXCR4 to induce a rapid and transient rise in the level of intracellular calcium ions and chemotaxis. SDF-1-beta(3-72) and SDF-1-alpha(3-67) show a reduced chemotactic activity. Binding to cell surface proteoglycans seems to inhibit formation of SDF-1-alpha(3-67) and thus to preserve activity on local sites. Also binds to atypical chemokine receptor ACKR3, which activates the beta-arrestin pathway and acts as a scavenger receptor for SDF-1. Binds to the allosteric site (site 2) of integrins and activates integrins ITGAV:ITGB3, ITGA4:ITGB1 and ITGA5:ITGB1 in a CXCR4-independent manner. Acts as a positive regulator of monocyte migration and a negative regulator of monocyte adhesion via the LYN kinase. Stimulates migration of monocytes and T-lymphocytes through its receptors, CXCR4 and ACKR3, and decreases monocyte adherence to surfaces coated with ICAM-1, a ligand for beta-2 integrins. SDF1A/CXCR4 signaling axis inhibits beta-2 integrin LFA-1 mediated adhesion of monocytes to ICAM-1 through LYN kinase. Inhibits CXCR4-mediated infection by T-cell line-adapted HIV-1. Plays a protective role after myocardial infarction. Induces down-regulation and internalization of ACKR3 expressed in various cells. Has several critical functions during embryonic development; required for B-cell lymphopoiesis, myelopoiesis in bone marrow and heart ventricular septum formation. Stimulates the proliferation of bone marrow-derived B-cell progenitors in the presence of IL7 as well as growth of stromal cell-dependent pre-B-cells. In Homo sapiens (Human), this protein is Stromal cell-derived factor 1 (CXCL12).